A 184-amino-acid polypeptide reads, in one-letter code: Tumor necrosis factor alpha-induced protein 8-like protein 2 (184 aa).

This sequence belongs to the TNFAIP8 family. TNFAIP8L2 subfamily. As to quaternary structure, may interact with CASP8; however, such result is unclear since could not reproduce the interaction with CASP8. Interacts with RAC1. In terms of processing, ubiquitinated in a BTRC-depdent manner; leading to degradation mediated through the proteasome pathway.

The protein resides in the cytoplasm. It is found in the nucleus. The protein localises to the lysosome. Its function is as follows. Acts as a negative regulator of innate and adaptive immunity by maintaining immune homeostasis. Plays a regulatory role in the Toll-like signaling pathway by determining the strength of LPS-induced signaling and gene expression. Inhibits TCR-mediated T-cell activation and negatively regulate T-cell function to prevent hyperresponsiveness. Also inhibits autolysosome formation via negatively modulating MTOR activation by interacting with RAC1 and promoting the disassociation of the RAC1-MTOR complex. Plays an essential role in NK-cell biology by acting as a checkpoint and displaying an expression pattern correlating with NK-cell maturation process and by negatively regulating NK-cell maturation and antitumor immunity. Mechanistically, suppresses IL-15-triggered mTOR activity in NK-cells. The sequence is that of Tumor necrosis factor alpha-induced protein 8-like protein 2 (TNFAIP8L2) from Rhinolophus ferrumequinum (Greater horseshoe bat).